We begin with the raw amino-acid sequence, 134 residues long: UPF0102 protein SYNW1051 (134 aa).

Belongs to the UPF0102 family.

The protein is UPF0102 protein SYNW1051 of Parasynechococcus marenigrum (strain WH8102).